We begin with the raw amino-acid sequence, 271 residues long: Mannosyl-3-phosphoglycerate phosphatase (271 aa).

The Nucleophile role is filled by Asp-13. Mg(2+) is bound by residues Asp-13, Asp-15, and Asp-214.

Belongs to the HAD-like hydrolase superfamily. MPGP family. It depends on Mg(2+) as a cofactor.

The protein resides in the cytoplasm. It carries out the reaction 2-O-(alpha-D-mannosyl)-3-phosphoglycerate + H2O = (2R)-2-O-(alpha-D-mannosyl)-glycerate + phosphate. This Escherichia coli O45:K1 (strain S88 / ExPEC) protein is Mannosyl-3-phosphoglycerate phosphatase.